The chain runs to 1058 residues: Ubiquitin-like modifier-activating enzyme 1 (1058 aa).

The disordered stretch occupies residues 1-46; that stretch reads MSSSPLSKKRRVSGPDPKPGSNCSSAQSVLSEVSSVPTNGMAKNGS. N-acetylserine is present on S2. Residues S4, S13, S21, S24, and S46 each carry the phosphoserine modification. Residues 24–36 show a composition bias toward low complexity; that stretch reads SSAQSVLSEVSSV. Y55 carries the phosphotyrosine modification. A run of 2 repeats spans residues 63–199 and 459–611. The interval 63 to 611 is 2 approximate repeats; it reads GHEAMKMLQT…GTKGNVQVVI (549 aa). Residues A478, D504, R515, K528, and 576 to 577 contribute to the ATP site; that span reads DN. N6-succinyllysine is present on K528. C632 functions as the Glycyl thioester intermediate in the catalytic mechanism. At K671 the chain carries N6-acetyllysine. The residue at position 800 (T800) is a Phosphothreonine. A phosphoserine mark is found at S810, S816, S820, and S835. K980 is modified (N6-acetyllysine).

This sequence belongs to the ubiquitin-activating E1 family. Monomer. Interacts with GAN (via BTB domain). In terms of processing, ISGylated.

It localises to the cytoplasm. The protein localises to the mitochondrion. It is found in the nucleus. The enzyme catalyses ATP + ubiquitin + [E1 ubiquitin-activating enzyme]-L-cysteine = AMP + diphosphate + S-ubiquitinyl-[E1 ubiquitin-activating enzyme]-L-cysteine.. The protein operates within protein modification; protein ubiquitination. Catalyzes the first step in ubiquitin conjugation to mark cellular proteins for degradation through the ubiquitin-proteasome system. Activates ubiquitin by first adenylating its C-terminal glycine residue with ATP, and thereafter linking this residue to the side chain of a cysteine residue in E1, yielding a ubiquitin-E1 thioester and free AMP. Essential for the formation of radiation-induced foci, timely DNA repair and for response to replication stress. Promotes the recruitment of TP53BP1 and BRCA1 at DNA damage sites. The polypeptide is Ubiquitin-like modifier-activating enzyme 1 (Rattus norvegicus (Rat)).